Consider the following 561-residue polypeptide: Zinc finger protein with KRAB and SCAN domains 1 (561 aa).

Residues 1 to 51 are disordered; the sequence is MMTAESRETTGLSPQAAQEKDGIVIVKVEEEDEEDHMWGQDSSLQETPPPD. Ser13 is modified (phosphoserine). Residue Lys27 forms a Glycyl lysine isopeptide (Lys-Gly) (interchain with G-Cter in SUMO2) linkage. The SCAN box domain maps to 56–138; sequence RQRFRRFCYQ…TLLEDLELDL (83 aa). The interval 163–187 is disordered; it reads VQESSSFDHHETAQSHFKHSSRKPR. Basic residues predominate over residues 178–187; that stretch reads HFKHSSRKPR. Residues Lys180 and Lys226 each participate in a glycyl lysine isopeptide (Lys-Gly) (interchain with G-Cter in SUMO2) cross-link. Residues 225-304 form the KRAB domain; it reads VKIEDMAVSL…QKEFGEKREQ (80 aa). Residues 260–275 are compositionally biased toward polar residues; it reads NVFSQGSENRNGNEST. Residues 260-372 form a disordered region; it reads NVFSQGSENR…NTPEEAPSGA (113 aa). Composition is skewed to basic and acidic residues over residues 276 to 286 and 294 to 349; these read SKAEVKEDSTS and FQKE…EKGK. Glycyl lysine isopeptide (Lys-Gly) (interchain with G-Cter in SUMO2) cross-links involve residues Lys277, Lys296, Lys301, and Lys336. The segment covering 355 to 365 has biased composition (polar residues); it reads FSLSANFNNTP. Residue Lys373 forms a Glycyl lysine isopeptide (Lys-Gly) (interchain with G-Cter in SUMO2) linkage. 6 consecutive C2H2-type zinc fingers follow at residues 375 to 397, 403 to 425, 431 to 453, 459 to 481, 487 to 509, and 515 to 537; these read HRCD…KIIH, YECN…QRIH, HECN…QRIH, YECS…RRIH, and YKCT…HRIH. Glycyl lysine isopeptide (Lys-Gly) (interchain with G-Cter in SUMO2) cross-links involve residues Lys410, Lys438, and Lys476. Lys558 participates in a covalent cross-link: Glycyl lysine isopeptide (Lys-Gly) (interchain with G-Cter in SUMO2).

Belongs to the krueppel C2H2-type zinc-finger protein family.

The protein localises to the nucleus. Its function is as follows. May be involved in transcriptional regulation. This Mus musculus (Mouse) protein is Zinc finger protein with KRAB and SCAN domains 1 (Zkscan1).